Consider the following 153-residue polypeptide: Protein SprT-like (153 aa).

The SprT-like domain maps to 7-145; it reads QTLVEKISIV…VCGKCHGRLS (139 aa). Position 67 (His67) interacts with Zn(2+). Glu68 is an active-site residue. Position 71 (His71) interacts with Zn(2+).

It belongs to the SprT family. Zn(2+) is required as a cofactor.

It is found in the cytoplasm. This is Protein SprT-like from Enterococcus faecalis (strain ATCC 700802 / V583).